Here is a 977-residue protein sequence, read N- to C-terminus: DNA-directed RNA polymerase 3B, chloroplastic (977 aa).

A chloroplast-targeting transit peptide spans 1–71 (MASTASYSPS…NNIQSQTTVC (71 aa)). Residues Asp678, Lys753, and Asp910 contribute to the active site.

It belongs to the phage and mitochondrial RNA polymerase family.

It localises to the plastid. Its subcellular location is the chloroplast. The enzyme catalyses RNA(n) + a ribonucleoside 5'-triphosphate = RNA(n+1) + diphosphate. DNA-dependent RNA polymerase catalyzes the transcription of DNA into RNA using the four ribonucleoside triphosphates as substrates. The polypeptide is DNA-directed RNA polymerase 3B, chloroplastic (RPOT3-TOM) (Nicotiana tabacum (Common tobacco)).